The following is a 189-amino-acid chain: Peptidyl-tRNA hydrolase (189 aa).

Tyr14 is a binding site for tRNA. The active-site Proton acceptor is the His19. Residues Tyr64, Asn66, and Asn112 each contribute to the tRNA site.

This sequence belongs to the PTH family. As to quaternary structure, monomer.

It is found in the cytoplasm. It carries out the reaction an N-acyl-L-alpha-aminoacyl-tRNA + H2O = an N-acyl-L-amino acid + a tRNA + H(+). Functionally, hydrolyzes ribosome-free peptidyl-tRNAs (with 1 or more amino acids incorporated), which drop off the ribosome during protein synthesis, or as a result of ribosome stalling. In terms of biological role, catalyzes the release of premature peptidyl moieties from peptidyl-tRNA molecules trapped in stalled 50S ribosomal subunits, and thus maintains levels of free tRNAs and 50S ribosomes. The polypeptide is Peptidyl-tRNA hydrolase (Clostridium botulinum (strain Kyoto / Type A2)).